Here is a 170-residue protein sequence, read N- to C-terminus: Glycine cleavage system H protein, mitochondrial (170 aa).

A mitochondrion-targeting transit peptide spans 1-47; sequence MLRTTRLWTTRMPTVSKLFLRNSSGNALNKNKLPFLYSSQGPQAVRY. Residues 61–143 enclose the Lipoyl-binding domain; the sequence is TAFVGITKYA…MGDGWLVKMK (83 aa). N6-lipoyllysine is present on lysine 102.

It belongs to the GcvH family. Component of the glycine decarboxylase complex (GDC), which is composed of four proteins: P, T, L and H. (R)-lipoate serves as cofactor.

The protein localises to the mitochondrion. Its function is as follows. The glycine cleavage system (glycine decarboxylase complex) catalyzes the degradation of glycine. The H protein shuttles the methylamine group of glycine from the P protein to the T protein. This Saccharomyces cerevisiae (strain ATCC 204508 / S288c) (Baker's yeast) protein is Glycine cleavage system H protein, mitochondrial (GCV3).